The primary structure comprises 439 residues: Probable non-inhibitory serpin-Z9 (439 aa).

The tract at residues 12 to 44 (RRPPFPAGDANHRRLSSAPAPKPEAPAEAMPPP) is disordered. Residues 31–44 (APKPEAPAEAMPPP) are compositionally biased toward pro residues. An RCL region spans residues 389-413 (GIEETSVSMGLGKPLPAQHFKADHP).

It belongs to the serpin family.

In Oryza sativa subsp. japonica (Rice), this protein is Probable non-inhibitory serpin-Z9.